A 285-amino-acid polypeptide reads, in one-letter code: Bifunctional protein FolD (285 aa).

NADP(+) is bound by residues 166 to 168 (GAS) and Ile232.

This sequence belongs to the tetrahydrofolate dehydrogenase/cyclohydrolase family. Homodimer.

It catalyses the reaction (6R)-5,10-methylene-5,6,7,8-tetrahydrofolate + NADP(+) = (6R)-5,10-methenyltetrahydrofolate + NADPH. The catalysed reaction is (6R)-5,10-methenyltetrahydrofolate + H2O = (6R)-10-formyltetrahydrofolate + H(+). Its pathway is one-carbon metabolism; tetrahydrofolate interconversion. In terms of biological role, catalyzes the oxidation of 5,10-methylenetetrahydrofolate to 5,10-methenyltetrahydrofolate and then the hydrolysis of 5,10-methenyltetrahydrofolate to 10-formyltetrahydrofolate. The chain is Bifunctional protein FolD from Vibrio vulnificus (strain CMCP6).